Consider the following 546-residue polypeptide: Chaperonin GroEL 1 (546 aa).

Residues 30–33 (TLGP), lysine 51, 87–91 (DGTTT), glycine 415, 479–481 (NAA), and aspartate 495 contribute to the ATP site. Residues 526–546 (KEDAPMPGGMPGGMGGMGMDM) are disordered. The span at 534 to 546 (GMPGGMGGMGMDM) shows a compositional bias: gly residues.

It belongs to the chaperonin (HSP60) family. In terms of assembly, forms a cylinder of 14 subunits composed of two heptameric rings stacked back-to-back. Interacts with the co-chaperonin GroES.

The protein localises to the cytoplasm. It carries out the reaction ATP + H2O + a folded polypeptide = ADP + phosphate + an unfolded polypeptide.. Together with its co-chaperonin GroES, plays an essential role in assisting protein folding. The GroEL-GroES system forms a nano-cage that allows encapsulation of the non-native substrate proteins and provides a physical environment optimized to promote and accelerate protein folding. The polypeptide is Chaperonin GroEL 1 (Burkholderia vietnamiensis (strain G4 / LMG 22486) (Burkholderia cepacia (strain R1808))).